The sequence spans 250 residues: DNA repair protein RecO (250 aa).

This sequence belongs to the RecO family.

Functionally, involved in DNA repair and RecF pathway recombination. This chain is DNA repair protein RecO, found in Rhodopseudomonas palustris (strain ATCC BAA-98 / CGA009).